The sequence spans 976 residues: Dolichyl-phosphooligosaccharide-protein glycotransferase 1 (976 aa).

Residues 1–21 (MVKSKVKKVEKGKEGEEKRST) lie on the Cytoplasmic side of the membrane. The helical transmembrane segment at 22 to 42 (YVLLKKVLIPILVFGFAIYAF) threads the bilayer. Topologically, residues 43–112 (YLRHLTAGKY…KVVSLFGYNE (70 aa)) are extracellular. Positions 55 to 57 (DPD) match the DXD motif 1 motif. Asp-57 lines the Mn(2+) pocket. A helical transmembrane segment spans residues 113-133 (LQAFLLWPPFVGFLGVIAVYL). At 134 to 135 (LG) the chain is on the cytoplasmic side. Residues 136 to 156 (RKVLNEWTGLWGAVVLTVSTA) traverse the membrane as a helical segment. Over 157–165 (NFSRTFSGN) the chain is Extracellular. Residues 166–186 (ARGDGPFMALFIFASVAMLYY) traverse the membrane as a helical segment. Positions 167 and 169 each coordinate Mn(2+). The short motif at 167–169 (RGD) is the DXD motif 2 element. Residues 187 to 193 (LKESNKT) lie on the Cytoplasmic side of the membrane. Residues 194 to 214 (RKIIYGTLFVLLTVISLGAWN) traverse the membrane as a helical segment. Position 215 (Gly-215) is a topological domain, extracellular. Residues 216–236 (SPFGLMVLLGFASLQTIILFI) traverse the membrane as a helical segment. Over 237-247 (FGKLEELKKFV) the chain is Cytoplasmic. Residues 248-268 (KEFYPAYLAILAFGYALTFPG) form a helical membrane-spanning segment. Position 269 (Ile-269) is a topological domain, extracellular. Residues 270–290 (VKIGGFIRFAFEVFLGLIFLL) traverse the membrane as a helical segment. Topologically, residues 291–306 (VIMLYGGRYLNYSDKK) are cytoplasmic. Residues 307-327 (HRFLVVTIIVLLGFGGAYAYV) form a helical membrane-spanning segment. The Extracellular segment spans residues 328-360 (GPKLFRLMGGAYQSTQVYETVQELAKTTIGDVK). Positions 347–350 (TVQE) match the TIXE motif motif. The chain crosses the membrane as a helical span at residues 361 to 381 (AYYGVESGNGLIFFLSIPGLL). Residues 382–396 (ILLTKYLYDLFKKAK) lie on the Cytoplasmic side of the membrane. The helical transmembrane segment at 397-417 (SDNETLFALVFYTMSLYLLYL) threads the bilayer. A topological domain (extracellular) is located at residue Ala-418. A helical membrane pass occupies residues 419–439 (VRFLFLASYAVALFFGIFIGF). Arg-420 contacts a glycophospholipid. The Cytoplasmic segment spans residues 440-453 (SMDVIEKMKENIGI). A helical membrane pass occupies residues 454 to 474 (KAALGIVLSLMILVIPFVHAP). The Extracellular portion of the chain corresponds to 475-976 (VLARSARALK…SASAPHHSSE (502 aa)). Residues 513–515 (WWD) form an interacts with target acceptor peptide in protein substrate region. Positions 513–517 (WWDYG) match the WWDYG motif motif. Tyr-518 lines the a glycophospholipid pocket. Residues 573–580 (DWAKFNAI) carry the DK motif motif.

The protein belongs to the STT3 family. The cofactor is Mn(2+). It depends on Mg(2+) as a cofactor.

Its subcellular location is the cell membrane. The catalysed reaction is an archaeal dolichyl phosphooligosaccharide + [protein]-L-asparagine = an archaeal dolichyl phosphate + a glycoprotein with the oligosaccharide chain attached by N-beta-D-glycosyl linkage to a protein L-asparagine.. It functions in the pathway protein modification; protein glycosylation. In terms of biological role, oligosaccharyl transferase (OST) that catalyzes the initial transfer of a defined glycan (ManNAcXyl(2)GlcAMan(2)GalNAc in Pyrococcus) from the lipid carrier dolichol-monophosphate to an asparagine residue within an Asn-X-Ser/Thr consensus motif in nascent polypeptide chains, the first step in protein N-glycosylation. The sequence is that of Dolichyl-phosphooligosaccharide-protein glycotransferase 1 (aglB1) from Pyrococcus horikoshii (strain ATCC 700860 / DSM 12428 / JCM 9974 / NBRC 100139 / OT-3).